The primary structure comprises 378 residues: Erythronate-4-phosphate dehydrogenase (378 aa).

Residues serine 45 and threonine 66 each contribute to the substrate site. The NAD(+) site is built by aspartate 146 and threonine 175. Arginine 208 is a catalytic residue. Aspartate 232 is a binding site for NAD(+). Glutamate 237 is a catalytic residue. Catalysis depends on histidine 254, which acts as the Proton donor. Glycine 257 lines the NAD(+) pocket. A substrate-binding site is contributed by tyrosine 258.

Belongs to the D-isomer specific 2-hydroxyacid dehydrogenase family. PdxB subfamily. Homodimer.

The protein localises to the cytoplasm. The enzyme catalyses 4-phospho-D-erythronate + NAD(+) = (R)-3-hydroxy-2-oxo-4-phosphooxybutanoate + NADH + H(+). The protein operates within cofactor biosynthesis; pyridoxine 5'-phosphate biosynthesis; pyridoxine 5'-phosphate from D-erythrose 4-phosphate: step 2/5. In terms of biological role, catalyzes the oxidation of erythronate-4-phosphate to 3-hydroxy-2-oxo-4-phosphonooxybutanoate. This is Erythronate-4-phosphate dehydrogenase from Escherichia coli O6:K15:H31 (strain 536 / UPEC).